A 528-amino-acid chain; its full sequence is Glucans biosynthesis protein G 2 (528 aa).

Residues 1 to 44 (MRLHLTFNHSTPATGRKNTKHTLFFGSMLACIISIISLVVPAYG) form the signal peptide.

The protein belongs to the OpgD/OpgG family.

The protein localises to the periplasm. The protein operates within glycan metabolism; osmoregulated periplasmic glucan (OPG) biosynthesis. Involved in the biosynthesis of osmoregulated periplasmic glucans (OPGs). The polypeptide is Glucans biosynthesis protein G 2 (opgG2) (Shewanella oneidensis (strain ATCC 700550 / JCM 31522 / CIP 106686 / LMG 19005 / NCIMB 14063 / MR-1)).